The following is a 463-amino-acid chain: Serine carboxypeptidase-like 32 (463 aa).

The N-terminal stretch at 1-22 (MMNISNVSIALYLCTLFAFVSS) is a signal peptide. 3 disulfide bridges follow: Cys-86-Cys-345, Cys-249-Cys-262, and Cys-286-Cys-313. Asn-137 carries N-linked (GlcNAc...) asparagine glycosylation. The active site involves Ser-179. Asn-201 and Asn-250 each carry an N-linked (GlcNAc...) asparagine glycan. N-linked (GlcNAc...) asparagine glycans are attached at residues Asn-341 and Asn-354. Residues Asp-384 and His-436 contribute to the active site.

The protein belongs to the peptidase S10 family. In terms of tissue distribution, expressed in flowers.

It localises to the secreted. Its function is as follows. Probable carboxypeptidase. The sequence is that of Serine carboxypeptidase-like 32 (SCPL32) from Arabidopsis thaliana (Mouse-ear cress).